The following is a 322-amino-acid chain: Replication factor C small subunit (322 aa).

ATP is bound at residue 45–52 (GPPGVGKT).

It belongs to the activator 1 small subunits family. RfcS subfamily. As to quaternary structure, heteromultimer composed of small subunits (RfcS) and large subunits (RfcL).

Functionally, part of the RFC clamp loader complex which loads the PCNA sliding clamp onto DNA. This chain is Replication factor C small subunit, found in Methanocella arvoryzae (strain DSM 22066 / NBRC 105507 / MRE50).